Reading from the N-terminus, the 306-residue chain is Methionyl-tRNA formyltransferase (306 aa).

Residue Ser110–Pro113 participates in (6S)-5,6,7,8-tetrahydrofolate binding.

It belongs to the Fmt family.

It catalyses the reaction L-methionyl-tRNA(fMet) + (6R)-10-formyltetrahydrofolate = N-formyl-L-methionyl-tRNA(fMet) + (6S)-5,6,7,8-tetrahydrofolate + H(+). Functionally, attaches a formyl group to the free amino group of methionyl-tRNA(fMet). The formyl group appears to play a dual role in the initiator identity of N-formylmethionyl-tRNA by promoting its recognition by IF2 and preventing the misappropriation of this tRNA by the elongation apparatus. The polypeptide is Methionyl-tRNA formyltransferase (Brucella suis biovar 1 (strain 1330)).